The following is an 88-amino-acid chain: Small ribosomal subunit protein bS20 (88 aa).

Residues 1 to 20 (MANTKSARKSLIKSKQQRKC) are disordered.

The protein belongs to the bacterial ribosomal protein bS20 family.

Its function is as follows. Binds directly to 16S ribosomal RNA. This Blochmanniella pennsylvanica (strain BPEN) protein is Small ribosomal subunit protein bS20.